The sequence spans 1116 residues: MLKLFTKLFGTKSERDLKSIRPYVEKINLEYEKLVSLTNDELRKKTDSLKQYIKVETQEFIGELEIRERQLEATTQLTPKEVEDLYIQISRIKEQYNTQLEKVLLDILPQAFAIVKETARRFKENEQLIVTATGYDRELAITEKHIDIEGDQAIWKNQWEVTGHLLTWDMVHYDEQLIGGVILHKGKIAEMATGEGKTLVATLPTFLNALVGKGVHIVTVNEYLAKRDAAWMKPIYQFHGFTVACIEETSPYSAARREAYQADITYGTNNEFGFDYLRDNMASQQEEVVQREHHYAIVDEVDSVLIDDARTPLIISGPVEKGNEQEYITFNPRIKRLYEAQKQIVNQFLQEAKSQMVAGKNDEAGLPLFRAYRGLPKYKPLIKYLSEPGVKQLLHKTENYYIQDNSRMMPEADEPLLFTIDEKHNTVELTEKGLEYITQQGEDPDFFILPDTATAVGEIESDAGLDNLEKEQKKQILAQEYAIKSQRIHAVQQLLKAYALFEKDIDYILVDGKAKIVDEQTGRVLEGRRYSDGLHQAIEAKEEIKIEKASQTYATITLQNYFRLYHKLAGMTGTAETEAGEFYDIYHLDVVVTPTHKPVVREDKDDKVYKTVREKFNAIIEEITVLANQGRPVLVGTTSVEISELVSKMLNLRKIKHQVLNAKHHQKEAEIVAEAGKPGTVTIATNMAGRGTDIKLSPEAKAAGGLAIIGTERHESRRVDRQLRGRAGRQGDVGSSQFFVSLEDSLMRLFISDRIAKIMDSLGLKEGEMIQHSMITRSIERAQKKVEQNNYAYRKRLLEYDNELNKQREIIYRRRRDALLGHRLGAEVNAMLFEVAKSSVMQQGVKANYHVLATKFSYITGTLPPITEEEFHTYDIQKITDIIYQAFLSSYMNRLAVFKEQGIAVQMNLPDHIADIRAEYLSFSFSDSERRLEVPVKIADFMDNAGEAILKSLERVAIIYYLDRYWQEHLRYMDELRHSVQNASYEQKDPLLIYKFESYALFSTMIARANESIITYLLKANLLLYKASDEKPKMVEKNKRIELEESKQDIISLLRERASNSSEEILKPQPIKSQKIANRNERVTVQYEDGTIKENVKFKSVEEDIANGKCILLETR.

ATP-binding positions include glutamine 176, 194–198, and aspartate 693; that span reads GEGKT.

The protein belongs to the SecA family. As to quaternary structure, monomer and homodimer. Part of the essential Sec protein translocation apparatus which comprises SecA, SecYEG and auxiliary proteins SecDF. Other proteins may also be involved.

The protein localises to the cell inner membrane. Its subcellular location is the cytoplasm. It carries out the reaction ATP + H2O + cellular proteinSide 1 = ADP + phosphate + cellular proteinSide 2.. Part of the Sec protein translocase complex. Interacts with the SecYEG preprotein conducting channel. Has a central role in coupling the hydrolysis of ATP to the transfer of proteins into and across the cell membrane, serving as an ATP-driven molecular motor driving the stepwise translocation of polypeptide chains across the membrane. The polypeptide is Protein translocase subunit SecA (Amoebophilus asiaticus (strain 5a2)).